We begin with the raw amino-acid sequence, 555 residues long: Glypican-6 (555 aa).

The signal sequence occupies residues Met1 to Ala23. The span at Pro348–Pro357 shows a compositional bias: low complexity. 2 disordered regions span residues Pro348–Ala376 and Gly480–Cys501. Ser529 carries the GPI-anchor amidated serine lipid modification. Residues Ser530–Arg555 constitute a propeptide, removed in mature form.

This sequence belongs to the glypican family. Widely expressed. High expression in fetal kidney and lung and lower expressions in fetal liver and brain. In adult tissues, very abundant in ovary, high levels also observed in liver, kidney, small intestine and colon. Not detected in peripheral blood leukocytes. Detected in breast cancer cells (at protein level).

The protein resides in the cell membrane. It localises to the secreted. Its subcellular location is the extracellular space. Cell surface proteoglycan that bears heparan sulfate. Putative cell surface coreceptor for growth factors, extracellular matrix proteins, proteases and anti-proteases. Enhances migration and invasion of cancer cells through WNT5A signaling. The sequence is that of Glypican-6 (GPC6) from Homo sapiens (Human).